The sequence spans 474 residues: Putative matrix metalloproteinase (474 aa).

The first 17 residues, 1-17, serve as a signal peptide directing secretion; sequence MIIYFAVITCSLKLCRS. Residue histidine 189 participates in Zn(2+) binding. Glutamate 190 is a catalytic residue. Residues histidine 193 and histidine 199 each contribute to the Zn(2+) site. One copy of the Hemopexin repeat lies at 299–344; that stretch reads AGVYDAISYVRGDLYVFVGDLHWRFDTSGMLHNGYPQPTGATWRLP.

Belongs to the peptidase M10A family. Requires Zn(2+) as cofactor.

This is Putative matrix metalloproteinase from Heliothis virescens ascovirus 3e (HvAV-3e).